A 148-amino-acid chain; its full sequence is Deoxyuridine 5'-triphosphate nucleotidohydrolase (148 aa).

Belongs to the dUTPase family. Mg(2+) is required as a cofactor.

It catalyses the reaction dUTP + H2O = dUMP + diphosphate + H(+). The protein operates within pyrimidine metabolism; dUMP biosynthesis; dUMP from dCTP (dUTP route): step 2/2. This enzyme decreases the intracellular concentration of dUTP so that uracil cannot be incorporated into viral progeny DNA. This activity is sufficient to exclude uracil from the DNA during phage replication. In the case of dUTPase mutant phages, the host dUTPase activity is not sufficient to exclude uracil from T5 DNA and uracil are incorporated, leading to decreased phage viability. The protein is Deoxyuridine 5'-triphosphate nucleotidohydrolase (DUT) of Escherichia coli (Enterobacteria phage T5).